Reading from the N-terminus, the 209-residue chain is Uracil phosphoribosyltransferase (209 aa).

Residues arginine 79, arginine 104, and 131-139 (DPMLATGGS) each bind 5-phospho-alpha-D-ribose 1-diphosphate. Uracil is bound by residues isoleucine 194 and 199–201 (GDA). Aspartate 200 is a binding site for 5-phospho-alpha-D-ribose 1-diphosphate.

Belongs to the UPRTase family. Mg(2+) is required as a cofactor.

The enzyme catalyses UMP + diphosphate = 5-phospho-alpha-D-ribose 1-diphosphate + uracil. It participates in pyrimidine metabolism; UMP biosynthesis via salvage pathway; UMP from uracil: step 1/1. With respect to regulation, allosterically activated by GTP. Its function is as follows. Catalyzes the conversion of uracil and 5-phospho-alpha-D-ribose 1-diphosphate (PRPP) to UMP and diphosphate. The polypeptide is Uracil phosphoribosyltransferase (Streptococcus pyogenes serotype M1).